The sequence spans 349 residues: Transmembrane protein 59-like (349 aa).

Positions 1 to 22 (MDSVALMPLLLLLLLQPPPATP) are cleaved as a signal peptide. Residue asparagine 100 is glycosylated (N-linked (GlcNAc...) asparagine). A helical transmembrane segment spans residues 276–296 (ILACCLFLSVLVMLWLSCSTL). The short motif at 347–349 (TKL) is the Microbody targeting signal element.

It belongs to the TMEM59 family.

The protein resides in the golgi apparatus membrane. Functionally, modulates the O-glycosylation and complex N-glycosylation steps occurring during the Golgi maturation of APP. Inhibits APP transport to the cell surface and further shedding. This is Transmembrane protein 59-like (TMEM59L) from Bos taurus (Bovine).